The chain runs to 78 residues: Large ribosomal subunit protein bL28 (78 aa).

It belongs to the bacterial ribosomal protein bL28 family.

This chain is Large ribosomal subunit protein bL28, found in Acaryochloris marina (strain MBIC 11017).